We begin with the raw amino-acid sequence, 500 residues long: Beta-glucosidase 30 (500 aa).

A signal peptide spans 1–25 (MGIRMGRRLLFTLFLGALFCNGVYA). Q46 provides a ligand contact to a beta-D-glucoside. N-linked (GlcNAc...) asparagine glycosylation is found at N63 and N114. Residues H149 and 194-195 (NE) contribute to the a beta-D-glucoside site. Residue E195 is the Proton donor of the active site. Residues C214 and C222 are joined by a disulfide bond. Y338 provides a ligand contact to a beta-D-glucoside. N-linked (GlcNAc...) asparagine glycosylation occurs at N363. An a beta-D-glucoside-binding site is contributed by E409. E409 functions as the Nucleophile in the catalytic mechanism. Residues N416 and N417 are each glycosylated (N-linked (GlcNAc...) asparagine). Residues W456, 463 to 464 (EW), and F472 contribute to the a beta-D-glucoside site.

Belongs to the glycosyl hydrolase 1 family.

The enzyme catalyses Hydrolysis of terminal, non-reducing beta-D-glucosyl residues with release of beta-D-glucose.. In Oryza sativa subsp. japonica (Rice), this protein is Beta-glucosidase 30 (BGLU30).